We begin with the raw amino-acid sequence, 633 residues long: Extracellular metalloproteinase 3 (633 aa).

A signal peptide spans M1–A18. A propeptide spanning residues H19–S246 is cleaved from the precursor. N-linked (GlcNAc...) asparagine glycosylation is present at N410. Zn(2+) is bound at residue H429. E430 is an active-site residue. H433 lines the Zn(2+) pocket. Residues N480 and N622 are each glycosylated (N-linked (GlcNAc...) asparagine).

Belongs to the peptidase M36 family. Requires Zn(2+) as cofactor.

It is found in the secreted. Secreted metalloproteinase probably acting as a virulence factor. The chain is Extracellular metalloproteinase 3 (MEP3) from Arthroderma benhamiae (Trichophyton mentagrophytes).